The sequence spans 918 residues: Eukaryotic translation initiation factor 3 subunit C (918 aa).

The segment at 1–174 (MSRFFKGGSS…EEEGRRVVKS (174 aa)) is disordered. Residues S10, S12, S16, S19, and S20 each carry the phosphoserine modification. Acidic residues-rich tracts occupy residues 36 to 47 (SSSEEESSEEES), 54 to 67 (ESSE…ESEV), and 79 to 128 (EDSE…ESDE). The residue at position 667 (T667) is a Phosphothreonine. The region spanning 681–856 (FHMHINLELL…GAIIFERVEI (176 aa)) is the PCI domain. Positions 879-918 (KLYEQKTQHTNPQENRRRDKGGSVKRRNERTENRNRSDMN) are disordered. Over residues 907–918 (ERTENRNRSDMN) the composition is skewed to basic and acidic residues.

Belongs to the eIF-3 subunit C family. As to quaternary structure, component of the eukaryotic translation initiation factor 3 (eIF-3) complex. The eIF-3 complex appears to include tif32/eif3a, SPAC25G10.08/eif3b, tif33/eif3c, SPBC4C3.07/eif3f, tif35/eif3g and sum1/eif3i. This set of common subunits may also associate exclusively with either moe1/eif3d and int6/eif3e, or with SPAC821.05/eif3h and SPAC1751.03/eif3m. The eIF-3 complex may also include SPAC3A12.13c/eif3j.

It is found in the cytoplasm. Component of the eukaryotic translation initiation factor 3 (eIF-3) complex, which is involved in protein synthesis of a specialized repertoire of mRNAs and, together with other initiation factors, stimulates binding of mRNA and methionyl-tRNAi to the 40S ribosome. The eIF-3 complex specifically targets and initiates translation of a subset of mRNAs involved in cell proliferation. The chain is Eukaryotic translation initiation factor 3 subunit C (nip1) from Schizosaccharomyces pombe (strain 972 / ATCC 24843) (Fission yeast).